Reading from the N-terminus, the 380-residue chain is Glucose-1-phosphate adenylyltransferase (380 aa).

Alpha-D-glucose 1-phosphate is bound by residues glycine 164, 179 to 180 (EK), and serine 190.

It belongs to the bacterial/plant glucose-1-phosphate adenylyltransferase family. Homotetramer.

The enzyme catalyses alpha-D-glucose 1-phosphate + ATP + H(+) = ADP-alpha-D-glucose + diphosphate. The protein operates within glycan biosynthesis; glycogen biosynthesis. Involved in the biosynthesis of ADP-glucose, a building block required for the elongation reactions to produce glycogen. Catalyzes the reaction between ATP and alpha-D-glucose 1-phosphate (G1P) to produce pyrophosphate and ADP-Glc. In Streptococcus pneumoniae serotype 2 (strain D39 / NCTC 7466), this protein is Glucose-1-phosphate adenylyltransferase.